The sequence spans 387 residues: UDP-N-acetylglucosamine--N-acetylmuramyl-(pentapeptide) pyrophosphoryl-undecaprenol N-acetylglucosamine transferase (387 aa).

Residues 1-22 (MSEHVRSAGPPQASTAPSGGSA) form a disordered region. UDP-N-acetyl-alpha-D-glucosamine contacts are provided by residues 41–43 (TGG), Asn-158, Arg-194, Ser-222, Ile-276, and Gln-321.

The protein belongs to the glycosyltransferase 28 family. MurG subfamily.

The protein resides in the cell inner membrane. The catalysed reaction is di-trans,octa-cis-undecaprenyl diphospho-N-acetyl-alpha-D-muramoyl-L-alanyl-D-glutamyl-meso-2,6-diaminopimeloyl-D-alanyl-D-alanine + UDP-N-acetyl-alpha-D-glucosamine = di-trans,octa-cis-undecaprenyl diphospho-[N-acetyl-alpha-D-glucosaminyl-(1-&gt;4)]-N-acetyl-alpha-D-muramoyl-L-alanyl-D-glutamyl-meso-2,6-diaminopimeloyl-D-alanyl-D-alanine + UDP + H(+). It functions in the pathway cell wall biogenesis; peptidoglycan biosynthesis. Its function is as follows. Cell wall formation. Catalyzes the transfer of a GlcNAc subunit on undecaprenyl-pyrophosphoryl-MurNAc-pentapeptide (lipid intermediate I) to form undecaprenyl-pyrophosphoryl-MurNAc-(pentapeptide)GlcNAc (lipid intermediate II). In Polaromonas sp. (strain JS666 / ATCC BAA-500), this protein is UDP-N-acetylglucosamine--N-acetylmuramyl-(pentapeptide) pyrophosphoryl-undecaprenol N-acetylglucosamine transferase.